We begin with the raw amino-acid sequence, 331 residues long: Phenylalanine--tRNA ligase alpha subunit (331 aa).

Glu256 contributes to the Mg(2+) binding site.

Belongs to the class-II aminoacyl-tRNA synthetase family. Phe-tRNA synthetase alpha subunit type 1 subfamily. As to quaternary structure, tetramer of two alpha and two beta subunits. The cofactor is Mg(2+).

It is found in the cytoplasm. It catalyses the reaction tRNA(Phe) + L-phenylalanine + ATP = L-phenylalanyl-tRNA(Phe) + AMP + diphosphate + H(+). The protein is Phenylalanine--tRNA ligase alpha subunit of Colwellia psychrerythraea (strain 34H / ATCC BAA-681) (Vibrio psychroerythus).